The primary structure comprises 426 residues: ORC1-type DNA replication protein 1 (426 aa).

ATP contacts are provided by residues 62 to 66 (VGKTL), Tyr211, and Arg223.

The protein belongs to the CDC6/cdc18 family.

Involved in regulation of DNA replication. In Haloarcula marismortui (strain ATCC 43049 / DSM 3752 / JCM 8966 / VKM B-1809) (Halobacterium marismortui), this protein is ORC1-type DNA replication protein 1 (cdc6a).